Consider the following 66-residue polypeptide: Brevinin-1DYb (66 aa).

Positions 1-22 (MFTLKKSLLLLFFLGTISLSLC) are cleaved as a signal peptide. Positions 23 to 44 (EEERNAEEERRDYPEERDVEVE) are excised as a propeptide. Cys60 and Cys66 are joined by a disulfide.

As to expression, expressed by the skin glands.

Its subcellular location is the secreted. In terms of biological role, antimicrobial peptide. Has low activity against the Gram-positive bacterium S.aureus and the Gram-negative bacterium E.coli (MIC&lt;15 uM). Has a strong hemolytic activity. The chain is Brevinin-1DYb from Rana dybowskii (Dybovsky's frog).